The following is a 267-amino-acid chain: Chorismate mutase (267 aa).

Residues 7-262 (LSDASKALDL…EVEYLMQRLK (256 aa)) form the Chorismate mutase domain. L-tyrosine-binding residues include Arg-77, Arg-78, Asn-145, Gly-147, Ser-148, and Thr-151. 3 residues coordinate L-tryptophan: Asn-145, Gly-147, and Ser-148.

In terms of assembly, homodimer.

The protein localises to the cytoplasm. It carries out the reaction chorismate = prephenate. Its pathway is metabolic intermediate biosynthesis; prephenate biosynthesis; prephenate from chorismate: step 1/1. Its activity is regulated as follows. Each dimer has two allosteric binding sites that can bind the regulatory effectors tryptophan or tyrosine. Can bind either one tryptophan or one tyrosine, two tryptophan or two tyrosine or one tryptophan and one tyrosine, which differentially affect the catalytic activity. Activated by tryptophan and subject to feedback inhibition by tyrosine. In the presence of both tryptophan and tyrosine, the enzyme is in the activated state. In terms of biological role, catalyzes the Claisen rearrangement of chorismate to prephenate. Acts at the first branch point in the aromatic amino acid pathway where it steers biosynthesis towards phenylalanine and tyrosine, and away from tryptophan. The protein is Chorismate mutase of Emericella nidulans (strain FGSC A4 / ATCC 38163 / CBS 112.46 / NRRL 194 / M139) (Aspergillus nidulans).